The primary structure comprises 203 residues: Ribosomal RNA large subunit methyltransferase E (203 aa).

S-adenosyl-L-methionine contacts are provided by G51, W53, D69, D85, and D108. Catalysis depends on K148, which acts as the Proton acceptor.

This sequence belongs to the class I-like SAM-binding methyltransferase superfamily. RNA methyltransferase RlmE family.

It localises to the cytoplasm. The enzyme catalyses uridine(2552) in 23S rRNA + S-adenosyl-L-methionine = 2'-O-methyluridine(2552) in 23S rRNA + S-adenosyl-L-homocysteine + H(+). Specifically methylates the uridine in position 2552 of 23S rRNA at the 2'-O position of the ribose in the fully assembled 50S ribosomal subunit. The polypeptide is Ribosomal RNA large subunit methyltransferase E (Methanosphaerula palustris (strain ATCC BAA-1556 / DSM 19958 / E1-9c)).